The sequence spans 685 residues: Kinesin-related protein 11 (685 aa).

The region spanning 4–405 is the Kinesin motor domain; that stretch reads NISVSVRARP…LKFASRAKKI (402 aa). The tract at residues 36–105 is disordered; sequence TSLPPPITQP…TTVPASPAPT (70 aa). Positions 47–105 are enriched in low complexity; it reads SSLPPISTPIKSSSSSSTSTSAGSLKTPLKTPLKTPLKTPLKTNSTTTNTTVPASPAPT. 156 to 163 lines the ATP pocket; the sequence is GITSSGKT. A coiled-coil region spans residues 411–488; the sequence is VNEILDDKAL…KINNLNKLIL (78 aa). Residues 495–568 form a disordered region; it reads NSASKGGSGS…QSTSSLTIGG (74 aa). Residues 511–520 are compositionally biased toward polar residues; it reads RSTFVSPSQN. Over residues 533–565 the composition is skewed to low complexity; the sequence is PNSFSNLLLQSPSQNNNNNSHISPLSQSTSSLT. Positions 574 to 683 form a coiled coil; the sequence is FESNELIQIQ…LKSKIQEYEV (110 aa).

It belongs to the TRAFAC class myosin-kinesin ATPase superfamily. Kinesin family.

It localises to the cytoplasm. It is found in the cytoskeleton. Functionally, microtubule-associated force-producing protein that plays a role in organelle transport. Its motor activity is directed toward the microtubule's plus end. This is Kinesin-related protein 11 (kif11) from Dictyostelium discoideum (Social amoeba).